The primary structure comprises 70 residues: U2-agatoxin-Ao1m (70 aa).

Positions 1 to 20 (MRAIISLFLISAMVFSMIQA) are cleaved as a signal peptide. Residues 21 to 34 (VPEEXGLQLSEDER) constitute a propeptide that is removed on maturation. Intrachain disulfides connect Cys-37–Cys-53, Cys-44–Cys-58, and Cys-52–Cys-68. Leu-69 carries the leucine amide modification.

The protein belongs to the neurotoxin 01 (U2-agtx) family. In terms of tissue distribution, expressed by the venom gland.

It is found in the secreted. Insect active toxin causing rapid but reversible paralysis in crickets. No activity shown in mammals. Does not show effect on mammalian voltage-gated calcium channels. The sequence is that of U2-agatoxin-Ao1m from Agelena orientalis (Funnel-web spider).